We begin with the raw amino-acid sequence, 437 residues long: UDP-N-acetylmuramoylalanine--D-glutamate ligase (437 aa).

Residue 115–121 (GSNGKST) participates in ATP binding.

It belongs to the MurCDEF family.

The protein localises to the cytoplasm. It catalyses the reaction UDP-N-acetyl-alpha-D-muramoyl-L-alanine + D-glutamate + ATP = UDP-N-acetyl-alpha-D-muramoyl-L-alanyl-D-glutamate + ADP + phosphate + H(+). Its pathway is cell wall biogenesis; peptidoglycan biosynthesis. Its function is as follows. Cell wall formation. Catalyzes the addition of glutamate to the nucleotide precursor UDP-N-acetylmuramoyl-L-alanine (UMA). The polypeptide is UDP-N-acetylmuramoylalanine--D-glutamate ligase (Vibrio parahaemolyticus serotype O3:K6 (strain RIMD 2210633)).